An 82-amino-acid polypeptide reads, in one-letter code: MDKHFVYIVKCNDGSLYTGYAKDVNARVIKHNNGKGAKYTKIRRPVELVYQETYTTKSEALKREYEIKTYTRQQKLKMIQEG.

Residues 2-77 (DKHFVYIVKC…KTYTRQQKLK (76 aa)) enclose the GIY-YIG domain.

This sequence belongs to the UPF0213 family.

The chain is UPF0213 protein SERP0126 from Staphylococcus epidermidis (strain ATCC 35984 / DSM 28319 / BCRC 17069 / CCUG 31568 / BM 3577 / RP62A).